The primary structure comprises 546 residues: Undecaprenyl phosphate-alpha-4-amino-4-deoxy-L-arabinose arabinosyl transferase (546 aa).

12 consecutive transmembrane segments (helical) span residues 6–26, 87–107, 113–133, 177–197, 208–228, 260–280, 289–309, 313–333, 345–365, 380–400, 410–430, and 450–467; these read INLA…PLGL, AASA…VGRF, AWVT…GTYS, LLTK…PFMI, WGWW…LAIH, YYLP…PSAI, SPLL…FSAA, LVTY…QGII, IGSV…IVLF, PWLL…SIKA, YMLM…NISI, and AILI…NWYF.

This sequence belongs to the glycosyltransferase 83 family.

It localises to the cell inner membrane. It catalyses the reaction 4-amino-4-deoxy-alpha-L-arabinopyranosyl di-trans,octa-cis-undecaprenyl phosphate + lipid IVA = lipid IIA + di-trans,octa-cis-undecaprenyl phosphate.. Its pathway is lipopolysaccharide metabolism; 4-amino-4-deoxy-beta-L-arabinose-lipid A biosynthesis. Functionally, catalyzes the transfer of the L-Ara4N moiety of the glycolipid undecaprenyl phosphate-alpha-L-Ara4N to lipid A. The modified arabinose is attached to lipid A and is required for resistance to polymyxin and cationic antimicrobial peptides. This chain is Undecaprenyl phosphate-alpha-4-amino-4-deoxy-L-arabinose arabinosyl transferase, found in Shewanella sediminis (strain HAW-EB3).